The primary structure comprises 357 residues: NAD-dependent protein deacetylase HST2 (357 aa).

An N-acetylserine modification is found at S2. In terms of domain architecture, Deacetylase sirtuin-type spans 5–284 (TASTEMSVRK…EQLVEELGWQ (280 aa)). NAD(+) contacts are provided by residues 32–52 (GAGI…TGLY) and 115–118 (QNID). The active-site Proton acceptor is the H135. Residues C143, C146, C170, and C173 each coordinate Zn(2+). NAD(+) is bound by residues 223-225 (GTS), 248-250 (NLE), and S270. The segment covering 317–329 (LDQSEHESADKKD) has biased composition (basic and acidic residues). The tract at residues 317 to 357 (LDQSEHESADKKDKKLQRLNGHDSDEDGASNSSSSQKAAKE) is disordered. S340 bears the Phosphoserine mark.

The protein belongs to the sirtuin family. Class I subfamily. Homotrimer. Monomer. Homotrimeric in its unliganded state. Undergoes a trimer-monomer transition upon acetyl-lysine substrate binding. Zn(2+) serves as cofactor.

It localises to the cytoplasm. It is found in the nucleus. The catalysed reaction is N(6)-acetyl-L-lysyl-[protein] + NAD(+) + H2O = 2''-O-acetyl-ADP-D-ribose + nicotinamide + L-lysyl-[protein]. With respect to regulation, inhibited by ADP-ribose and nicotinamide. Its function is as follows. NAD-dependent histone deacetylase that is involved in nuclear silencing events. Derepresses subtelomeric silencing and increases repression in nucleolar (rDNA) silencing. Its function is negatively regulated by active nuclear export. This is NAD-dependent protein deacetylase HST2 (HST2) from Saccharomyces cerevisiae (strain ATCC 204508 / S288c) (Baker's yeast).